Consider the following 428-residue polypeptide: Flap endonuclease 1-B (428 aa).

The interval 1–132 is N-domain; it reads MGIKGLTKVL…KELAKRSLKR (132 aa). Asp-34 contributes to the Mg(2+) binding site. Arg-98 is a binding site for DNA. Mg(2+) contacts are provided by Asp-114, Glu-186, Glu-188, Asp-207, and Asp-209. Residues 150 to 281 form an I-domain region; the sequence is AVEKFSKRTV…QRALKLIRQH (132 aa). Glu-186 contributes to the DNA binding site. The DNA site is built by Gly-259 and Asp-261. A Mg(2+)-binding site is contributed by Asp-261.

This sequence belongs to the XPG/RAD2 endonuclease family. FEN1 subfamily. In terms of assembly, interacts with PCNA. Three molecules of FEN1 bind to one PCNA trimer with each molecule binding to one PCNA monomer. PCNA stimulates the nuclease activity without altering cleavage specificity. Requires Mg(2+) as cofactor. Phosphorylated. Phosphorylation upon DNA damage induces relocalization to the nuclear plasma.

The protein resides in the nucleus. It is found in the nucleolus. The protein localises to the nucleoplasm. Its subcellular location is the mitochondrion. Structure-specific nuclease with 5'-flap endonuclease and 5'-3' exonuclease activities involved in DNA replication and repair. During DNA replication, cleaves the 5'-overhanging flap structure that is generated by displacement synthesis when DNA polymerase encounters the 5'-end of a downstream Okazaki fragment. It enters the flap from the 5'-end and then tracks to cleave the flap base, leaving a nick for ligation. Also involved in the long patch base excision repair (LP-BER) pathway, by cleaving within the apurinic/apyrimidinic (AP) site-terminated flap. Acts as a genome stabilization factor that prevents flaps from equilibrating into structures that lead to duplications and deletions. Also possesses 5'-3' exonuclease activity on nicked or gapped double-stranded DNA, and exhibits RNase H activity. Also involved in replication and repair of rDNA and in repairing mitochondrial DNA. The protein is Flap endonuclease 1-B of Sorghum bicolor (Sorghum).